Here is a 244-residue protein sequence, read N- to C-terminus: 5-oxoprolinase subunit A (244 aa).

It belongs to the LamB/PxpA family. In terms of assembly, forms a complex composed of PxpA, PxpB and PxpC.

It carries out the reaction 5-oxo-L-proline + ATP + 2 H2O = L-glutamate + ADP + phosphate + H(+). Functionally, catalyzes the cleavage of 5-oxoproline to form L-glutamate coupled to the hydrolysis of ATP to ADP and inorganic phosphate. The chain is 5-oxoprolinase subunit A from Salmonella heidelberg (strain SL476).